Here is a 253-residue protein sequence, read N- to C-terminus: Electron transfer flavoprotein subunit beta, mitochondrial (253 aa).

The protein belongs to the ETF beta-subunit/FixA family. Heterodimer of an alpha and a beta subunit. Requires FAD as cofactor. It depends on AMP as a cofactor.

It localises to the mitochondrion matrix. Functionally, the electron transfer flavoprotein serves as a specific electron acceptor for several dehydrogenases, including five acyl-CoA dehydrogenases, glutaryl-CoA and sarcosine dehydrogenase. It transfers the electrons to the main mitochondrial respiratory chain via ETF-ubiquinone oxidoreductase (ETF dehydrogenase). This Oryza sativa subsp. indica (Rice) protein is Electron transfer flavoprotein subunit beta, mitochondrial (ETFB).